Here is a 274-residue protein sequence, read N- to C-terminus: Thiamine kinase (274 aa).

This sequence belongs to the thiamine kinase family.

It carries out the reaction thiamine + ATP = thiamine phosphate + ADP + H(+). It functions in the pathway cofactor biosynthesis; thiamine diphosphate biosynthesis; thiamine phosphate from thiamine: step 1/1. Functionally, catalyzes the ATP-dependent phosphorylation of thiamine to thiamine phosphate. Is involved in thiamine salvage. In Salmonella dublin (strain CT_02021853), this protein is Thiamine kinase.